Consider the following 258-residue polypeptide: Indole-3-glycerol phosphate synthase (258 aa).

Belongs to the TrpC family.

The catalysed reaction is 1-(2-carboxyphenylamino)-1-deoxy-D-ribulose 5-phosphate + H(+) = (1S,2R)-1-C-(indol-3-yl)glycerol 3-phosphate + CO2 + H2O. The protein operates within amino-acid biosynthesis; L-tryptophan biosynthesis; L-tryptophan from chorismate: step 4/5. This chain is Indole-3-glycerol phosphate synthase, found in Chlorobium phaeobacteroides (strain DSM 266 / SMG 266 / 2430).